The following is a 502-amino-acid chain: Glycerol kinase (502 aa).

Residue threonine 14 participates in ADP binding. 3 residues coordinate ATP: threonine 14, threonine 15, and serine 16. Threonine 14 contributes to the sn-glycerol 3-phosphate binding site. An ADP-binding site is contributed by arginine 18. Sn-glycerol 3-phosphate-binding residues include arginine 84, glutamate 85, tyrosine 136, and aspartate 246. The glycerol site is built by arginine 84, glutamate 85, tyrosine 136, aspartate 246, and glutamine 247. Residues threonine 268 and glycine 311 each coordinate ADP. Positions 268, 311, 315, and 412 each coordinate ATP. 2 residues coordinate ADP: glycine 412 and asparagine 416.

This sequence belongs to the FGGY kinase family. As to quaternary structure, homotetramer and homodimer (in equilibrium). Heterodimer with EIIA-Glc. Binds 1 zinc ion per glycerol kinase EIIA-Glc dimer. The zinc ion is important for dimerization.

It catalyses the reaction glycerol + ATP = sn-glycerol 3-phosphate + ADP + H(+). The protein operates within polyol metabolism; glycerol degradation via glycerol kinase pathway; sn-glycerol 3-phosphate from glycerol: step 1/1. Activity of this regulatory enzyme is affected by several metabolites. Allosterically and non-competitively inhibited by fructose 1,6-bisphosphate (FBP) and unphosphorylated phosphocarrier protein EIIA-Glc (III-Glc), an integral component of the bacterial phosphotransferase (PTS) system. In terms of biological role, key enzyme in the regulation of glycerol uptake and metabolism. Catalyzes the phosphorylation of glycerol to yield sn-glycerol 3-phosphate. This chain is Glycerol kinase, found in Escherichia coli O81 (strain ED1a).